Reading from the N-terminus, the 244-residue chain is Phosphoadenosine 5'-phosphosulfate reductase (244 aa).

Cys-239 (nucleophile; cysteine thiosulfonate intermediate) is an active-site residue.

This sequence belongs to the PAPS reductase family. CysH subfamily.

The protein localises to the cytoplasm. It catalyses the reaction [thioredoxin]-disulfide + sulfite + adenosine 3',5'-bisphosphate + 2 H(+) = [thioredoxin]-dithiol + 3'-phosphoadenylyl sulfate. It functions in the pathway sulfur metabolism; hydrogen sulfide biosynthesis; sulfite from sulfate: step 3/3. Its function is as follows. Catalyzes the formation of sulfite from phosphoadenosine 5'-phosphosulfate (PAPS) using thioredoxin as an electron donor. In Shigella flexneri serotype 5b (strain 8401), this protein is Phosphoadenosine 5'-phosphosulfate reductase.